Reading from the N-terminus, the 675-residue chain is Methionine--tRNA ligase (675 aa).

Positions 15-25 match the 'HIGH' region motif; that stretch reads PYANGSIHLGH. 4 residues coordinate Zn(2+): cysteine 146, cysteine 149, cysteine 159, and cysteine 162. A 'KMSKS' region motif is present at residues 332–336; that stretch reads KMSKS. Lysine 335 is a binding site for ATP. The 103-residue stretch at 573-675 folds into the tRNA-binding domain; sequence DFAKVDMRIA…SGAQPGMQVK (103 aa).

The protein belongs to the class-I aminoacyl-tRNA synthetase family. MetG type 1 subfamily. In terms of assembly, homodimer. Zn(2+) is required as a cofactor.

It is found in the cytoplasm. The catalysed reaction is tRNA(Met) + L-methionine + ATP = L-methionyl-tRNA(Met) + AMP + diphosphate. Its function is as follows. Is required not only for elongation of protein synthesis but also for the initiation of all mRNA translation through initiator tRNA(fMet) aminoacylation. The chain is Methionine--tRNA ligase from Yersinia pseudotuberculosis serotype IB (strain PB1/+).